The sequence spans 270 residues: 4-hydroxy-tetrahydrodipicolinate reductase (270 aa).

NAD(+)-binding positions include 8-13, D34, 102-104, and 128-131; these read GALGRM, GTT, and SQNY. H160 serves as the catalytic Proton donor/acceptor. A (S)-2,3,4,5-tetrahydrodipicolinate-binding site is contributed by H161. The active-site Proton donor is the K164. 170 to 171 is a binding site for (S)-2,3,4,5-tetrahydrodipicolinate; that stretch reads GT.

This sequence belongs to the DapB family.

Its subcellular location is the cytoplasm. The catalysed reaction is (S)-2,3,4,5-tetrahydrodipicolinate + NAD(+) + H2O = (2S,4S)-4-hydroxy-2,3,4,5-tetrahydrodipicolinate + NADH + H(+). It carries out the reaction (S)-2,3,4,5-tetrahydrodipicolinate + NADP(+) + H2O = (2S,4S)-4-hydroxy-2,3,4,5-tetrahydrodipicolinate + NADPH + H(+). It functions in the pathway amino-acid biosynthesis; L-lysine biosynthesis via DAP pathway; (S)-tetrahydrodipicolinate from L-aspartate: step 4/4. Catalyzes the conversion of 4-hydroxy-tetrahydrodipicolinate (HTPA) to tetrahydrodipicolinate. This is 4-hydroxy-tetrahydrodipicolinate reductase from Methanococcus maripaludis (strain C5 / ATCC BAA-1333).